A 347-amino-acid chain; its full sequence is NADH-quinone oxidoreductase subunit H (347 aa).

A run of 8 helical transmembrane segments spans residues 21 to 41 (VAGILLIALPLMLAVAMIIYA), 87 to 107 (GLFLIAPIITFTVALLAWAVI), 118 to 138 (INVGLLYILAISSLGVYGVIL), 157 to 177 (AQMISYEVSIGFILIGVVLFA), 195 to 215 (GIVNAFGFNLLLFPLAVMFLI), 258 to 278 (NVLLMCTLNAVLFWGGWLPPI), 283 to 303 (LYAVPGIIWLFAKILFFFFVF), and 323 to 343 (WKIFLPISLIWIFLISGYLML).

The protein belongs to the complex I subunit 1 family. In terms of assembly, NDH-1 is composed of 14 different subunits. Subunits NuoA, H, J, K, L, M, N constitute the membrane sector of the complex.

The protein resides in the cell inner membrane. It carries out the reaction a quinone + NADH + 5 H(+)(in) = a quinol + NAD(+) + 4 H(+)(out). In terms of biological role, NDH-1 shuttles electrons from NADH, via FMN and iron-sulfur (Fe-S) centers, to quinones in the respiratory chain. The immediate electron acceptor for the enzyme in this species is believed to be ubiquinone. Couples the redox reaction to proton translocation (for every two electrons transferred, four hydrogen ions are translocated across the cytoplasmic membrane), and thus conserves the redox energy in a proton gradient. This subunit may bind ubiquinone. The chain is NADH-quinone oxidoreductase subunit H from Sphingopyxis alaskensis (strain DSM 13593 / LMG 18877 / RB2256) (Sphingomonas alaskensis).